The chain runs to 314 residues: Ribosomal protein L11 methyltransferase (314 aa).

Residues Thr-161, Gly-182, Asp-204, and Asn-248 each contribute to the S-adenosyl-L-methionine site.

This sequence belongs to the methyltransferase superfamily. PrmA family.

It is found in the cytoplasm. It catalyses the reaction L-lysyl-[protein] + 3 S-adenosyl-L-methionine = N(6),N(6),N(6)-trimethyl-L-lysyl-[protein] + 3 S-adenosyl-L-homocysteine + 3 H(+). Its function is as follows. Methylates ribosomal protein L11. This is Ribosomal protein L11 methyltransferase from Listeria innocua serovar 6a (strain ATCC BAA-680 / CLIP 11262).